A 348-amino-acid chain; its full sequence is Outer membrane protein assembly factor BamC (348 aa).

Positions 1–24 are cleaved as a signal peptide; that stretch reads MATLLQTSKVMKVAGLSLVVFLAA. The N-palmitoyl cysteine moiety is linked to residue Cys25. Cys25 carries S-diacylglycerol cysteine lipidation. The interval 211–230 is disordered; that stretch reads SQQQEEAGQNNAKDSGALTV.

Belongs to the BamC family. Part of the Bam complex, which is composed of the outer membrane protein BamA, and four lipoproteins BamB, BamC, BamD and BamE.

It is found in the cell outer membrane. In terms of biological role, part of the outer membrane protein assembly complex, which is involved in assembly and insertion of beta-barrel proteins into the outer membrane. The protein is Outer membrane protein assembly factor BamC of Xenorhabdus nematophila (strain ATCC 19061 / DSM 3370 / CCUG 14189 / LMG 1036 / NCIMB 9965 / AN6).